A 364-amino-acid chain; its full sequence is Fructose-bisphosphate aldolase C (364 aa).

Residue Y5 is modified to Phosphotyrosine. 3 positions are modified to phosphoserine: S36, S39, and S45. R56 is a binding site for substrate. K111 is subject to N6-acetyllysine. S132 is subject to Phosphoserine. K147 contacts substrate. The active-site Proton acceptor is E188. K230 acts as the Schiff-base intermediate with dihydroxyacetone-P in catalysis.

Belongs to the class I fructose-bisphosphate aldolase family. Homotetramer. Interacts with ATP6V1E1. May interact with PLD2.

It carries out the reaction beta-D-fructose 1,6-bisphosphate = D-glyceraldehyde 3-phosphate + dihydroxyacetone phosphate. Its pathway is carbohydrate degradation; glycolysis; D-glyceraldehyde 3-phosphate and glycerone phosphate from D-glucose: step 4/4. The protein is Fructose-bisphosphate aldolase C (ALDOC) of Homo sapiens (Human).